The following is a 540-amino-acid chain: Glucose-6-phosphate isomerase (540 aa).

E350 functions as the Proton donor in the catalytic mechanism. Catalysis depends on residues H381 and K503.

The protein belongs to the GPI family.

It is found in the cytoplasm. The catalysed reaction is alpha-D-glucose 6-phosphate = beta-D-fructose 6-phosphate. It functions in the pathway carbohydrate biosynthesis; gluconeogenesis. It participates in carbohydrate degradation; glycolysis; D-glyceraldehyde 3-phosphate and glycerone phosphate from D-glucose: step 2/4. Catalyzes the reversible isomerization of glucose-6-phosphate to fructose-6-phosphate. The chain is Glucose-6-phosphate isomerase from Burkholderia cenocepacia (strain ATCC BAA-245 / DSM 16553 / LMG 16656 / NCTC 13227 / J2315 / CF5610) (Burkholderia cepacia (strain J2315)).